Consider the following 232-residue polypeptide: Large ribosomal subunit protein uL1 (232 aa).

Belongs to the universal ribosomal protein uL1 family. Part of the 50S ribosomal subunit.

Functionally, binds directly to 23S rRNA. The L1 stalk is quite mobile in the ribosome, and is involved in E site tRNA release. Protein L1 is also a translational repressor protein, it controls the translation of the L11 operon by binding to its mRNA. This Chlamydia trachomatis serovar L2b (strain UCH-1/proctitis) protein is Large ribosomal subunit protein uL1.